Reading from the N-terminus, the 1319-residue chain is Probable membrane antigen 3 (1319 aa).

It is found in the virion tegument. The sequence is that of Probable membrane antigen 3 (3) from Equine herpesvirus 2 (strain 86/87) (EHV-2).